The sequence spans 112 residues: Large ribosomal subunit protein P2A (112 aa).

The segment at 83 to 112 is disordered; that stretch reads GAAPAAEAKKEEKVEEKEESDDDMGFSLFD. A compositionally biased stretch (basic and acidic residues) spans 89–98; that stretch reads EAKKEEKVEE.

It belongs to the eukaryotic ribosomal protein P1/P2 family. In terms of assembly, P1 and P2 exist as dimers at the large ribosomal subunit. Phosphorylated.

Its function is as follows. Plays an important role in the elongation step of protein synthesis. This Zea mays (Maize) protein is Large ribosomal subunit protein P2A (RPP2A).